A 129-amino-acid chain; its full sequence is MAKTAAKVRKKVKKNVAEGIAHVHASFNNTIITITDRQGNALSWATSGGAGFKGSRKSTPFAAQVAAEAAGKAAQECGVKNLEVRIKGPGPGRESAVRALNALGMKISSITDITPIPHNGCRPPKKRRI.

It belongs to the universal ribosomal protein uS11 family. Part of the 30S ribosomal subunit. Interacts with proteins S7 and S18. Binds to IF-3.

Located on the platform of the 30S subunit, it bridges several disparate RNA helices of the 16S rRNA. Forms part of the Shine-Dalgarno cleft in the 70S ribosome. This Aromatoleum aromaticum (strain DSM 19018 / LMG 30748 / EbN1) (Azoarcus sp. (strain EbN1)) protein is Small ribosomal subunit protein uS11.